Consider the following 84-residue polypeptide: MALSKEEILTGLAEIINEVAGIPTSDVQPEKSFTDDLDVDSLSMVEVVVAAEEKFGVRIPDDEVKNLKTVGDAVDYIANATVSA.

A Carrier domain is found at 6 to 81 (EEILTGLAEI…DAVDYIANAT (76 aa)). The residue at position 41 (serine 41) is an O-(pantetheine 4'-phosphoryl)serine.

Belongs to the acyl carrier protein (ACP) family. 4'-phosphopantetheine is transferred from CoA to a specific serine of apo-ACP by AcpS. This modification is essential for activity because fatty acids are bound in thioester linkage to the sulfhydryl of the prosthetic group.

It is found in the cytoplasm. The protein operates within lipid metabolism; fatty acid biosynthesis. Its function is as follows. Carrier of the growing fatty acid chain in fatty acid biosynthesis. In Acidothermus cellulolyticus (strain ATCC 43068 / DSM 8971 / 11B), this protein is Acyl carrier protein.